A 225-amino-acid polypeptide reads, in one-letter code: Uracil-DNA glycosylase (225 aa).

Residue Asp65 is the Proton acceptor of the active site.

The protein belongs to the uracil-DNA glycosylase (UDG) superfamily. UNG family.

The protein resides in the cytoplasm. It carries out the reaction Hydrolyzes single-stranded DNA or mismatched double-stranded DNA and polynucleotides, releasing free uracil.. Its function is as follows. Excises uracil residues from the DNA which can arise as a result of misincorporation of dUMP residues by DNA polymerase or due to deamination of cytosine. This is Uracil-DNA glycosylase from Alkaliphilus oremlandii (strain OhILAs) (Clostridium oremlandii (strain OhILAs)).